The following is a 497-amino-acid chain: B3 domain-containing protein REM1 (497 aa).

3 DNA-binding regions (TF-B3) span residues 7-92 (PSLF…SSES), 142-239 (FLRA…LCSH), and 278-379 (FLTQ…HSKI). The tract at residues 87 to 135 (AVSSESDDDESDDTDDSESDDESNDTDDSESDDSEDNGEGDSSLVNKEA) is disordered. Residues 91–125 (ESDDDESDDTDDSESDDESNDTDDSESDDSEDNGE) show a composition bias toward acidic residues.

As to expression, specifically expressed in the reproductive meristem.

It is found in the nucleus. Its function is as follows. May play a role in flower development. This is B3 domain-containing protein REM1 (REM1) from Brassica oleracea var. botrytis (Cauliflower).